Consider the following 414-residue polypeptide: 4-hydroxy-3-methylbut-2-en-1-yl diphosphate synthase (flavodoxin) (414 aa).

Residues cysteine 304, cysteine 307, cysteine 350, and glutamate 357 each contribute to the [4Fe-4S] cluster site.

Belongs to the IspG family. [4Fe-4S] cluster serves as cofactor.

It catalyses the reaction (2E)-4-hydroxy-3-methylbut-2-enyl diphosphate + oxidized [flavodoxin] + H2O + 2 H(+) = 2-C-methyl-D-erythritol 2,4-cyclic diphosphate + reduced [flavodoxin]. Its pathway is isoprenoid biosynthesis; isopentenyl diphosphate biosynthesis via DXP pathway; isopentenyl diphosphate from 1-deoxy-D-xylulose 5-phosphate: step 5/6. Its function is as follows. Converts 2C-methyl-D-erythritol 2,4-cyclodiphosphate (ME-2,4cPP) into 1-hydroxy-2-methyl-2-(E)-butenyl 4-diphosphate. This Aromatoleum aromaticum (strain DSM 19018 / LMG 30748 / EbN1) (Azoarcus sp. (strain EbN1)) protein is 4-hydroxy-3-methylbut-2-en-1-yl diphosphate synthase (flavodoxin).